Consider the following 142-residue polypeptide: Large ribosomal subunit protein uL13 (142 aa).

It belongs to the universal ribosomal protein uL13 family. As to quaternary structure, part of the 50S ribosomal subunit.

In terms of biological role, this protein is one of the early assembly proteins of the 50S ribosomal subunit, although it is not seen to bind rRNA by itself. It is important during the early stages of 50S assembly. The protein is Large ribosomal subunit protein uL13 of Saccharophagus degradans (strain 2-40 / ATCC 43961 / DSM 17024).